Reading from the N-terminus, the 271-residue chain is Zinc finger protein 501 (271 aa).

9 C2H2-type zinc fingers span residues 22 to 44 (SKCS…QRIH), 50 to 72 (YVCS…LRIH), 78 to 100 (YKCN…LRIH), 106 to 128 (YKCN…QRIH), 134 to 156 (YKCT…QRSH), 162 to 184 (FKCN…QRIH), 190 to 212 (YTCT…ERTH), 218 to 240 (YKCS…YRIH), and 246 to 268 (YECV…QRLH).

This sequence belongs to the krueppel C2H2-type zinc-finger protein family.

Its subcellular location is the nucleus. It is found in the nucleolus. May be involved in transcriptional regulation. Essential for Golgi structural integrity. The sequence is that of Zinc finger protein 501 (ZNF501) from Homo sapiens (Human).